Reading from the N-terminus, the 343-residue chain is KRR1 small subunit processome component homolog (343 aa).

A KH domain is found at D125–N193. The segment covering N232 to K245 has biased composition (basic residues). Positions N232–V343 are disordered. Positions F270–D302 form a coiled coil. Basic and acidic residues predominate over residues L271–D302. Over residues L331 to V343 the composition is skewed to basic residues.

It belongs to the KRR1 family. As to quaternary structure, monomer. Component of the ribosomal small subunit (SSU) processome.

The protein resides in the nucleus. The protein localises to the nucleolus. Required for 40S ribosome biogenesis. Involved in nucleolar processing of pre-18S ribosomal RNA and ribosome assembly. Binds to RNA. Required for female germline development, cell viability during eye development and for survival of dividing cells and epithelial cells during early wing disk development. The polypeptide is KRR1 small subunit processome component homolog (Drosophila ananassae (Fruit fly)).